A 208-amino-acid chain; its full sequence is Uracil phosphoribosyltransferase (208 aa).

Residues Arg-78, Arg-103, and 130-138 (DPMLATGGS) each bind 5-phospho-alpha-D-ribose 1-diphosphate. Residues Ile-193 and 198–200 (GDA) each bind uracil. Asp-199 lines the 5-phospho-alpha-D-ribose 1-diphosphate pocket.

The protein belongs to the UPRTase family. It depends on Mg(2+) as a cofactor.

It carries out the reaction UMP + diphosphate = 5-phospho-alpha-D-ribose 1-diphosphate + uracil. It participates in pyrimidine metabolism; UMP biosynthesis via salvage pathway; UMP from uracil: step 1/1. Its activity is regulated as follows. Allosterically activated by GTP. Its function is as follows. Catalyzes the conversion of uracil and 5-phospho-alpha-D-ribose 1-diphosphate (PRPP) to UMP and diphosphate. The polypeptide is Uracil phosphoribosyltransferase (Actinobacillus succinogenes (strain ATCC 55618 / DSM 22257 / CCUG 43843 / 130Z)).